The chain runs to 63 residues: MSSTSDKVKGMANEAVGNVKQAVGKATDNTKLQAEGKAQELKGEGQQAKGEVKDAVKKGVDKV.

Positions 20-63 (KQAVGKATDNTKLQAEGKAQELKGEGQQAKGEVKDAVKKGVDKV) are disordered. Basic and acidic residues predominate over residues 50–63 (GEVKDAVKKGVDKV).

Belongs to the UPF0337 (CsbD) family.

In Pseudomonas syringae pv. tomato (strain ATCC BAA-871 / DC3000), this protein is UPF0337 protein PSPTO_1596.